Reading from the N-terminus, the 502-residue chain is RNA-splicing ligase RtcB homolog 2 (502 aa).

Mn(2+) contacts are provided by Asp120, Cys123, His228, His260, and His354. 227–231 (NHYAE) lines the GMP pocket. GMP is bound by residues 354–355 (HN), 403–406 (GGSM), Ser410, and 429–432 (HGAG). His429 functions as the GMP-histidine intermediate in the catalytic mechanism.

This sequence belongs to the RtcB family. In terms of assembly, catalytic component of the tRNA-splicing ligase complex. Requires Mn(2+) as cofactor.

The enzyme catalyses a 3'-end 3'-phospho-ribonucleotide-RNA + a 5'-end dephospho-ribonucleoside-RNA + GTP = a ribonucleotidyl-ribonucleotide-RNA + GMP + diphosphate. It carries out the reaction a 3'-end 2',3'-cyclophospho-ribonucleotide-RNA + a 5'-end dephospho-ribonucleoside-RNA + GTP + H2O = a ribonucleotidyl-ribonucleotide-RNA + GMP + diphosphate + H(+). Catalytic subunit of the tRNA-splicing ligase complex that acts by directly joining spliced tRNA halves to mature-sized tRNAs by incorporating the precursor-derived splice junction phosphate into the mature tRNA as a canonical 3',5'-phosphodiester. May act as an RNA ligase with broad substrate specificity, and may function toward other RNAs. This chain is RNA-splicing ligase RtcB homolog 2, found in Culex quinquefasciatus (Southern house mosquito).